We begin with the raw amino-acid sequence, 159 residues long: Ribosomal RNA large subunit methyltransferase H (159 aa).

S-adenosyl-L-methionine is bound by residues Leu-76, Gly-108, and Leu-127–Tyr-132.

Belongs to the RNA methyltransferase RlmH family. In terms of assembly, homodimer.

Its subcellular location is the cytoplasm. It catalyses the reaction pseudouridine(1915) in 23S rRNA + S-adenosyl-L-methionine = N(3)-methylpseudouridine(1915) in 23S rRNA + S-adenosyl-L-homocysteine + H(+). Its function is as follows. Specifically methylates the pseudouridine at position 1915 (m3Psi1915) in 23S rRNA. The polypeptide is Ribosomal RNA large subunit methyltransferase H (Ruminiclostridium cellulolyticum (strain ATCC 35319 / DSM 5812 / JCM 6584 / H10) (Clostridium cellulolyticum)).